Consider the following 684-residue polypeptide: MEENLISMREDHSFHVRYRMEASCLELALEGERLCKSGDCRAGVSFFEAAVQVGTEDLKTLSAIYSQLGNAYFYLHDYAKALEYHHHDLTLARTIGDQLGEAKASGNLGNTLKVLGNFDEAIVCCQRHLDISRELNDKVGEARALYNLGNVYHAKGKSFGCPGPQDVGEFPEEVRDALQAAVDFYEENLSLVTALGDRAAQGRAFGNLGNTHYLLGNFRDAVIAHEQRLLIAKEFGDKAAERRAYSNLGNAYIFLGEFETASEYYKKTLLLARQLKDRAVEAQSCYSLGNTYTLLQDYEKAIDYHLKHLAIAQELNDRIGEGRACWSLGNAYTALGNHDQAMHFAEKHLEISREVGDKSGELTARLNLSDLQMVLGLSYSTNNSIMSENTEIDSSLNGVRPKLGRRHSMENMELMKLTPEKVQNWNSEILAKQKPLIAKPSAKLLFVNRLKGKKYKTNSSTKVLQDASNSIDHRIPNSQRKISADTIGDEGFFDLLSRFQSNRMDDQRCCLQEKNCHTASTTTSSTPPKMMLKTSSVPVVSPNTDEFLDLLASSQSRRLDDQRASFSNLPGLRLTQNSQSVLSHLMTNDNKEADEDFFDILVKCQGSRLDDQRCAPPPATTKGPTVPDEDFFSLILRSQGKRMDEQRVLLQRDQNRDTDFGLKDFLQNNALLEFKNSGKKSADH.

The tract at residues 22-357 is important for interaction with NUMA1; INSC and FRMPD1; the sequence is ASCLELALEG…HLEISREVGD (336 aa). TPR repeat units lie at residues 24-57, 62-95, 102-135, 142-184, 202-235, 242-275, 282-315, and 322-355; these read CLEL…GTED, SAIY…ARTI, AKAS…SREL, ARAL…AVDF, GRAF…AKEF, RRAY…ARQL, AQSC…AQEL, and GRAC…SREV. Serine 132 bears the Phosphoserine; by PKG mark. The residue at position 352 (serine 352) is a Phosphoserine; by PKG. Phosphoserine occurs at positions 408 and 483. At threonine 486 the chain carries Phosphothreonine. A GoLoco 1 domain is found at 489 to 511; sequence DEGFFDLLSRFQSNRMDDQRCCL. Serine 501 bears the Phosphoserine; by PKC mark. A phosphoserine mark is found at serine 541 and serine 565. 3 GoLoco domains span residues 544 to 566, 594 to 616, and 628 to 650; these read TDEF…RASF, DEDF…RCAP, and DEDF…RVLL. Residue serine 607 is modified to Phosphoserine; by PKG. Positions 608, 613, 642, and 647 each coordinate GDP.

Belongs to the GPSM family. Interacts with the dynein-dynactin complex; this interaction is inhibited in a PLK1-dependent manner. Part of a spindle orientation complex at least composed of GNAI1, GPSM2 and NUMA1. Interacts with LLGL2. Interacts (via TPR repeat region) with INSC/inscuteable. Interacts (via TPR repeat region) with NUMA1 (via C-terminus); this interaction is direct, inhibited in a PLK1-dependent manner, prevents the binding of NUMA1 with SPAG5 and promotes spindle pole organization. INSC and NUMA1 compete for the same binding site, but INSC has higher affinity and can displace NUMA1 (in vitro). Interacts with GNAI2. Interacts (via GoLoco domains) with the GDP-bound form of GNAI1 and GNAI3; has much lower affinity for the GTP-bound form. Interaction with GDP-bound GNAI3 strongly enhances the affinity for NUMA1. Interacts (via TPR repeat region) with FRMPD1. INSC and FRMPD1 compete for the same binding site, but INSC has higher affinity and can displace FRMPD1 (in vitro). Interacts (via TPR repeat region) with FRMPD4. Identified in a complex with INSC and F2RL2/Par3. Interacts with TASOR. Ubiquitously expressed.

The protein resides in the cytoplasm. Its subcellular location is the cell cortex. The protein localises to the cytoskeleton. It localises to the spindle pole. It is found in the lateral cell membrane. Its function is as follows. Plays an important role in mitotic spindle pole organization via its interaction with NUMA1. Required for cortical dynein-dynactin complex recruitment during metaphase. Plays a role in metaphase spindle orientation. Also plays an important role in asymmetric cell divisions. Has guanine nucleotide dissociation inhibitor (GDI) activity towards G(i) alpha proteins, such as GNAI1 and GNAI3, and thereby regulates their activity. The sequence is that of G-protein-signaling modulator 2 (GPSM2) from Homo sapiens (Human).